Reading from the N-terminus, the 419-residue chain is Fusaric acid cluster transcription factor FUB10 (419 aa).

Positions 16-47 (CDRCRAQKLRCHRDSGHSTDACLRCLKSGIEC) form a DNA-binding region, zn(2)-C6 fungal-type. The interval 50–92 (SKARPTGRPPSRQVQPTVVVEQGDTSSSSHTTDSSPSAGGTDM) is disordered. Low complexity predominate over residues 74–86 (TSSSSHTTDSSPS).

The protein localises to the nucleus. Its function is as follows. Transcription factor that regulates the expression of the gene cluster that mediates the biosynthesis of fusaric acid, a mycotoxin with low to moderate toxicity to animals and humans, but with high phytotoxic properties. This is Fusaric acid cluster transcription factor FUB10 from Gibberella fujikuroi (strain CBS 195.34 / IMI 58289 / NRRL A-6831) (Bakanae and foot rot disease fungus).